A 178-amino-acid chain; its full sequence is 3-hydroxyacyl-[acyl-carrier-protein] dehydratase FabZ (178 aa).

Residue His54 is part of the active site.

The protein belongs to the thioester dehydratase family. FabZ subfamily.

It localises to the cytoplasm. It carries out the reaction a (3R)-hydroxyacyl-[ACP] = a (2E)-enoyl-[ACP] + H2O. Its function is as follows. Involved in unsaturated fatty acids biosynthesis. Catalyzes the dehydration of short chain beta-hydroxyacyl-ACPs and long chain saturated and unsaturated beta-hydroxyacyl-ACPs. This Yersinia enterocolitica protein is 3-hydroxyacyl-[acyl-carrier-protein] dehydratase FabZ.